The sequence spans 118 residues: Evasin P1080 (118 aa).

An N-terminal signal peptide occupies residues 1–19 (FFQLAVFVVILFNINLLSA). Intrachain disulfides connect Cys-41–Cys-60, Cys-45–Cys-62, and Cys-56–Cys-73. A glycan (N-linked (GlcNAc...) asparagine) is linked at Asn-44. N-linked (GlcNAc...) asparagine glycans are attached at residues Asn-67 and Asn-104.

The protein localises to the secreted. In terms of biological role, salivary chemokine-binding protein which binds to host chemokines CXCL1, CXCL2, CXCL3, CXCL4, CXCL5, CXCL6, CXCL10, CXCL11 and CXCL13. The sequence is that of Evasin P1080 from Ixodes ricinus (Common tick).